The following is a 465-amino-acid chain: MQHIHFDAIVIGSGPGGEGAAMGLVKQGKSVAVIERYNNVGGGCTHWGTIPSKALRHAVSRIIEFNQNPLYSDNSRVLRSSFAEILRRAEMVINQQTRMRQGFYERNGCRMFSGEATFIDDHRVSVRYADDNHDILSADKIIIATGSRPYCPPDVDFTHSRIYNSDSILKLDHEPRHVIIYGAGVIGCEYASIFRGLGVKVDLINTRNHLLAFLDQEMSDALSYHFWNSGIVIRHNEEYSKIEGVDDGVIVHLKSGKKVKADCLLYANGRTGNTDTLGLKNVGLEADSRGLLKVNKIYQTSNENIYAVGDVIGYPSLASAAYDQGRIAAQAMTKGNAEVHLIEDIPTGIYTIPEISSVGKTEQQLTAMKVPYEVGRAQFKHLARAQIAGMNVGSLKILFHRETKEILGIHCFGERAAEIIHIGQAIMEQKGESNTIEYFVNTTFNYPTMAEAYRVAALNGLNRLF.

Residue 35 to 44 coordinates FAD; it reads ERYNNVGGGC.

The protein belongs to the class-I pyridine nucleotide-disulfide oxidoreductase family. It depends on FAD as a cofactor.

It is found in the cytoplasm. It catalyses the reaction NAD(+) + NADPH = NADH + NADP(+). Its function is as follows. Conversion of NADPH, generated by peripheral catabolic pathways, to NADH, which can enter the respiratory chain for energy generation. This is Soluble pyridine nucleotide transhydrogenase from Photorhabdus laumondii subsp. laumondii (strain DSM 15139 / CIP 105565 / TT01) (Photorhabdus luminescens subsp. laumondii).